A 95-amino-acid chain; its full sequence is Protein TusB (95 aa).

The protein belongs to the DsrH/TusB family. Heterohexamer, formed by a dimer of trimers. The hexameric TusBCD complex contains 2 copies each of TusB, TusC and TusD. The TusBCD complex interacts with TusE.

Its subcellular location is the cytoplasm. Its function is as follows. Part of a sulfur-relay system required for 2-thiolation of 5-methylaminomethyl-2-thiouridine (mnm(5)s(2)U) at tRNA wobble positions. In Erwinia tasmaniensis (strain DSM 17950 / CFBP 7177 / CIP 109463 / NCPPB 4357 / Et1/99), this protein is Protein TusB.